The sequence spans 496 residues: NADP-dependent glyceraldehyde-3-phosphate dehydrogenase (496 aa).

A2 carries the post-translational modification N-acetylalanine. A Phosphothreonine modification is found at T4. Residues R116 and 169 to 170 (NY) each bind substrate. Positions 192, 195, and 230 each coordinate NADP(+). Residue 245-249 (GGDTG) participates in NAD(+) binding. E264 functions as the Proton acceptor in the catalytic mechanism. Position 297–299 (297–299 (RCT)) interacts with substrate. C298 functions as the Nucleophile in the catalytic mechanism. An NADP(+)-binding site is contributed by E391. R451 contributes to the substrate binding site.

It belongs to the aldehyde dehydrogenase family.

It is found in the cytoplasm. It carries out the reaction D-glyceraldehyde 3-phosphate + NADP(+) + H2O = (2R)-3-phosphoglycerate + NADPH + 2 H(+). In terms of biological role, important as a means of generating NADPH for biosynthetic reactions. This is NADP-dependent glyceraldehyde-3-phosphate dehydrogenase (ALDH11A3) from Arabidopsis thaliana (Mouse-ear cress).